The primary structure comprises 404 residues: Acyl-[acyl-carrier-protein] desaturase 7, chloroplastic (404 aa).

Residues 1–39 (MAASATTSTLAVTMFGYPNRNCHLKPPATATLRFWRSAA) constitute a chloroplast transit peptide. 6 residues coordinate Fe cation: glutamate 138, glutamate 176, histidine 179, glutamate 229, glutamate 262, and histidine 265.

This sequence belongs to the fatty acid desaturase type 2 family. In terms of assembly, homodimer. The cofactor is Fe(2+).

The protein localises to the plastid. It is found in the chloroplast. Its pathway is lipid metabolism; fatty acid metabolism. Introduces a cis double bond in the acyl chain of an acyl-[acyl-carrier protein]. The protein is Acyl-[acyl-carrier-protein] desaturase 7, chloroplastic of Oryza sativa subsp. indica (Rice).